The sequence spans 60 residues: Large ribosomal subunit protein bL32 (60 aa).

Disordered regions lie at residues 1 to 22 (MAVQQNKKSPSKRGMHRSHNAL) and 34 to 60 (GETHLRHHISPNGFYRGRQVLKNKSEA). Positions 9–19 (SPSKRGMHRSH) are enriched in basic residues.

This sequence belongs to the bacterial ribosomal protein bL32 family.

This Variovorax paradoxus (strain S110) protein is Large ribosomal subunit protein bL32.